Here is a 72-residue protein sequence, read N- to C-terminus: Translation initiation factor IF-1 (72 aa).

The 72-residue stretch at 1–72 (MAKEEVLEFP…TKGRITYRFK (72 aa)) folds into the S1-like domain.

Belongs to the IF-1 family. Component of the 30S ribosomal translation pre-initiation complex which assembles on the 30S ribosome in the order IF-2 and IF-3, IF-1 and N-formylmethionyl-tRNA(fMet); mRNA recruitment can occur at any time during PIC assembly.

It localises to the cytoplasm. One of the essential components for the initiation of protein synthesis. Stabilizes the binding of IF-2 and IF-3 on the 30S subunit to which N-formylmethionyl-tRNA(fMet) subsequently binds. Helps modulate mRNA selection, yielding the 30S pre-initiation complex (PIC). Upon addition of the 50S ribosomal subunit IF-1, IF-2 and IF-3 are released leaving the mature 70S translation initiation complex. The sequence is that of Translation initiation factor IF-1 from Brucella abortus (strain 2308).